Consider the following 48-residue polypeptide: Delta-stichotoxin-Hmg4b (48 aa).

3 disulfides stabilise this stretch: cysteine 3/cysteine 43, cysteine 5/cysteine 33, and cysteine 26/cysteine 44.

This sequence belongs to the sea anemone sodium channel inhibitory toxin family. Type II subfamily.

Its subcellular location is the secreted. The protein localises to the nematocyst. Functionally, binds specifically to voltage-gated sodium channels (Nav), thereby delaying their inactivation during signal transduction. Its toxicity is greater than that of RpII (AC P01534). In Heteractis magnifica (Magnificent sea anemone), this protein is Delta-stichotoxin-Hmg4b.